The following is a 367-amino-acid chain: Eukaryotic translation initiation factor 3 subunit H (367 aa).

The 153-residue stretch at 14 to 166 (VQVEALVVMK…LRAFRLSPTF (153 aa)) folds into the MPN domain.

It belongs to the eIF-3 subunit H family. Component of the eukaryotic translation initiation factor 3 (eIF-3) complex.

It is found in the cytoplasm. In terms of biological role, component of the eukaryotic translation initiation factor 3 (eIF-3) complex, which is involved in protein synthesis of a specialized repertoire of mRNAs and, together with other initiation factors, stimulates binding of mRNA and methionyl-tRNAi to the 40S ribosome. The eIF-3 complex specifically targets and initiates translation of a subset of mRNAs involved in cell proliferation. This is Eukaryotic translation initiation factor 3 subunit H from Botryotinia fuckeliana (strain B05.10) (Noble rot fungus).